The primary structure comprises 447 residues: Argininosuccinate synthase (447 aa).

ATP-binding positions include 20–28 (AFSGGLDTS) and Ala-46. Tyr-102 lines the L-citrulline pocket. Residues Gly-132 and Thr-134 each contribute to the ATP site. L-aspartate-binding residues include Thr-134, Asn-138, and Asp-139. L-citrulline is bound at residue Asn-138. Asp-139 serves as a coordination point for ATP. L-citrulline-binding residues include Arg-142 and Ser-195. Asp-197 serves as a coordination point for ATP. Positions 204, 206, and 283 each coordinate L-citrulline.

It belongs to the argininosuccinate synthase family. Type 2 subfamily. As to quaternary structure, homotetramer.

The protein resides in the cytoplasm. The catalysed reaction is L-citrulline + L-aspartate + ATP = 2-(N(omega)-L-arginino)succinate + AMP + diphosphate + H(+). The protein operates within amino-acid biosynthesis; L-arginine biosynthesis; L-arginine from L-ornithine and carbamoyl phosphate: step 2/3. The chain is Argininosuccinate synthase from Neisseria meningitidis serogroup C (strain 053442).